A 237-amino-acid chain; its full sequence is Large ribosomal subunit protein uL2 (237 aa).

A compositionally biased stretch (polar residues) spans 1 to 11; that stretch reads MGKRIISQNRG. Disordered regions lie at residues 1–20 and 201–237; these read MGKR…YRAP and FGGG…GVRR.

It belongs to the universal ribosomal protein uL2 family. Part of the 50S ribosomal subunit. Forms a bridge to the 30S subunit in the 70S ribosome.

One of the primary rRNA binding proteins. Required for association of the 30S and 50S subunits to form the 70S ribosome, for tRNA binding and peptide bond formation. It has been suggested to have peptidyltransferase activity; this is somewhat controversial. Makes several contacts with the 16S rRNA in the 70S ribosome. This Archaeoglobus fulgidus (strain ATCC 49558 / DSM 4304 / JCM 9628 / NBRC 100126 / VC-16) protein is Large ribosomal subunit protein uL2.